The primary structure comprises 291 residues: N-acetylmannosamine kinase (291 aa).

ATP-binding positions include 5–12 (AVDIGGTK) and 132–139 (GVGGGIVV). 4 residues coordinate Zn(2+): histidine 156, cysteine 166, cysteine 168, and cysteine 173.

It belongs to the ROK (NagC/XylR) family. NanK subfamily. Homodimer.

It carries out the reaction an N-acyl-D-mannosamine + ATP = an N-acyl-D-mannosamine 6-phosphate + ADP + H(+). It participates in amino-sugar metabolism; N-acetylneuraminate degradation; D-fructose 6-phosphate from N-acetylneuraminate: step 2/5. Catalyzes the phosphorylation of N-acetylmannosamine (ManNAc) to ManNAc-6-P. This chain is N-acetylmannosamine kinase (nanK2), found in Escherichia coli O6:H1 (strain CFT073 / ATCC 700928 / UPEC).